The primary structure comprises 538 residues: uncharacterized protein (538 aa).

4 disordered regions span residues 20–71 (RLSA…GGAQ), 151–211 (LWAE…EHPK), 288–331 (MLQP…QQHK), and 458–482 (EFEK…LKNY). Residues 154–171 (ESEKSESKGTRRDFRSYD) show a composition bias toward basic and acidic residues.

This is an uncharacterized protein from Homo sapiens (Human).